A 307-amino-acid polypeptide reads, in one-letter code: tRNA dimethylallyltransferase 2 (307 aa).

11 to 18 (GPTASGKT) is a binding site for ATP. 13–18 (TASGKT) lines the substrate pocket. Positions 36–39 (DSRQ) are interaction with substrate tRNA.

The protein belongs to the IPP transferase family. As to quaternary structure, monomer. Mg(2+) is required as a cofactor.

It catalyses the reaction adenosine(37) in tRNA + dimethylallyl diphosphate = N(6)-dimethylallyladenosine(37) in tRNA + diphosphate. In terms of biological role, catalyzes the transfer of a dimethylallyl group onto the adenine at position 37 in tRNAs that read codons beginning with uridine, leading to the formation of N6-(dimethylallyl)adenosine (i(6)A). The polypeptide is tRNA dimethylallyltransferase 2 (Phocaeicola vulgatus (strain ATCC 8482 / DSM 1447 / JCM 5826 / CCUG 4940 / NBRC 14291 / NCTC 11154) (Bacteroides vulgatus)).